The sequence spans 850 residues: DNA polymerase I (850 aa).

The region spanning 1 to 288 (MKLVIFDGNS…SIIKRLGLSE (288 aa)) is the 5'-3' exonuclease domain. A polymerase region spans residues 470 to 850 (VDRDALIQYT…KEGLNWYETK (381 aa)).

It belongs to the DNA polymerase type-A family.

The catalysed reaction is DNA(n) + a 2'-deoxyribonucleoside 5'-triphosphate = DNA(n+1) + diphosphate. In addition to polymerase activity, this DNA polymerase exhibits 3'-5' and 5'-3' exonuclease activity. The protein is DNA polymerase I (polA) of Caldicellulosiruptor bescii (strain ATCC BAA-1888 / DSM 6725 / KCTC 15123 / Z-1320) (Anaerocellum thermophilum).